Here is a 278-residue protein sequence, read N- to C-terminus: SLAM family member 8 (278 aa).

The N-terminal stretch at 1–20 is a signal peptide; sequence MWSLWSLLLFEALLPVVVVS. Over 21 to 231 the chain is Extracellular; the sequence is VQVLSKVGDS…AASGKASYKD (211 aa). N-linked (GlcNAc...) asparagine glycans are attached at residues N83 and N154. Residues 126–213 form the Ig-like C2-type domain; it reads PEVQVFTAAA…PVSWDMTTVT (88 aa). C150 and C199 are oxidised to a cystine. Residues 232–252 traverse the membrane as a helical segment; sequence VLLVVVPITLFLILAGLFGAW. The Cytoplasmic segment spans residues 253 to 278; it reads HHGLCSGKKKDACTDGVLPETENALV.

Its subcellular location is the membrane. Its function is as follows. May play a role in B-lineage commitment and/or modulation of signaling through the B-cell receptor. The protein is SLAM family member 8 (Slamf8) of Mus musculus (Mouse).